A 197-amino-acid chain; its full sequence is Small ribosomal subunit protein uS4 (197 aa).

Residues 88–150 enclose the S4 RNA-binding domain; the sequence is SRLDNLVYRM…AKSLEIILDN (63 aa).

This sequence belongs to the universal ribosomal protein uS4 family. In terms of assembly, part of the 30S ribosomal subunit. Contacts protein S5. The interaction surface between S4 and S5 is involved in control of translational fidelity.

Its function is as follows. One of the primary rRNA binding proteins, it binds directly to 16S rRNA where it nucleates assembly of the body of the 30S subunit. With S5 and S12 plays an important role in translational accuracy. This Azobacteroides pseudotrichonymphae genomovar. CFP2 protein is Small ribosomal subunit protein uS4.